A 395-amino-acid chain; its full sequence is Elongation factor Tu (395 aa).

Residues Lys-10–Val-205 form the tr-type G domain. The segment at Gly-19–Thr-26 is G1. Residue Gly-19–Thr-26 coordinates GTP. Thr-26 is a Mg(2+) binding site. Residues Gly-60–Asn-64 form a G2 region. The G3 stretch occupies residues Asp-81 to Gly-84. GTP-binding positions include Asp-81–His-85 and Asn-136–Asp-139. The G4 stretch occupies residues Asn-136–Asp-139. The G5 stretch occupies residues Ser-173–Phe-175.

It belongs to the TRAFAC class translation factor GTPase superfamily. Classic translation factor GTPase family. EF-Tu/EF-1A subfamily. Monomer.

Its subcellular location is the cytoplasm. It catalyses the reaction GTP + H2O = GDP + phosphate + H(+). Its function is as follows. GTP hydrolase that promotes the GTP-dependent binding of aminoacyl-tRNA to the A-site of ribosomes during protein biosynthesis. The chain is Elongation factor Tu from Treponema pallidum (strain Nichols).